We begin with the raw amino-acid sequence, 112 residues long: Small ribosomal subunit protein bS6 (112 aa).

This sequence belongs to the bacterial ribosomal protein bS6 family.

In terms of biological role, binds together with bS18 to 16S ribosomal RNA. In Chlamydia pneumoniae (Chlamydophila pneumoniae), this protein is Small ribosomal subunit protein bS6 (rpsF).